A 452-amino-acid polypeptide reads, in one-letter code: tRNA modification GTPase MnmE (452 aa).

R25, E82, and R125 together coordinate (6S)-5-formyl-5,6,7,8-tetrahydrofolate. Residues 221–374 (GLHVVLAGKP…LRARLLALAG (154 aa)) form the TrmE-type G domain. N231 lines the K(+) pocket. GTP-binding positions include 231-236 (NVGKSS), 250-256 (TPIAGTT), 275-278 (DTAG), and 355-357 (SAR). A Mg(2+)-binding site is contributed by S235. Residues T250, I252, and T255 each coordinate K(+). Position 256 (T256) interacts with Mg(2+). K452 contributes to the (6S)-5-formyl-5,6,7,8-tetrahydrofolate binding site.

This sequence belongs to the TRAFAC class TrmE-Era-EngA-EngB-Septin-like GTPase superfamily. TrmE GTPase family. As to quaternary structure, homodimer. Heterotetramer of two MnmE and two MnmG subunits. K(+) is required as a cofactor.

The protein localises to the cytoplasm. Its function is as follows. Exhibits a very high intrinsic GTPase hydrolysis rate. Involved in the addition of a carboxymethylaminomethyl (cmnm) group at the wobble position (U34) of certain tRNAs, forming tRNA-cmnm(5)s(2)U34. The chain is tRNA modification GTPase MnmE from Bordetella petrii (strain ATCC BAA-461 / DSM 12804 / CCUG 43448).